A 260-amino-acid polypeptide reads, in one-letter code: Adenosylcobinamide-GDP ribazoletransferase (260 aa).

6 helical membrane-spanning segments follow: residues 40–60 (AFPF…LLLL), 64–84 (ADPL…TGAL), 117–137 (YGAI…AAIV), 142–162 (PLAA…AITW), 189–209 (FALV…FGLW), and 210–230 (PLVA…VFIR).

The protein belongs to the CobS family. Requires Mg(2+) as cofactor.

The protein resides in the cell inner membrane. It catalyses the reaction alpha-ribazole + adenosylcob(III)inamide-GDP = adenosylcob(III)alamin + GMP + H(+). The catalysed reaction is alpha-ribazole 5'-phosphate + adenosylcob(III)inamide-GDP = adenosylcob(III)alamin 5'-phosphate + GMP + H(+). The protein operates within cofactor biosynthesis; adenosylcobalamin biosynthesis; adenosylcobalamin from cob(II)yrinate a,c-diamide: step 7/7. Its function is as follows. Joins adenosylcobinamide-GDP and alpha-ribazole to generate adenosylcobalamin (Ado-cobalamin). Also synthesizes adenosylcobalamin 5'-phosphate from adenosylcobinamide-GDP and alpha-ribazole 5'-phosphate. In Rhizobium etli (strain CIAT 652), this protein is Adenosylcobinamide-GDP ribazoletransferase.